Reading from the N-terminus, the 453-residue chain is Tubulin alpha chain (453 aa).

Position 11 (Gln-11) interacts with GTP. Lys-40 is modified (N6-acetyllysine). Residues Glu-71, Gly-144, Thr-145, Thr-179, Asn-206, and Asn-228 each coordinate GTP. Glu-71 serves as a coordination point for Mg(2+). Glu-254 is a catalytic residue.

The protein belongs to the tubulin family. As to quaternary structure, dimer of alpha and beta chains. A typical microtubule is a hollow water-filled tube with an outer diameter of 25 nm and an inner diameter of 15 nM. Alpha-beta heterodimers associate head-to-tail to form protofilaments running lengthwise along the microtubule wall with the beta-tubulin subunit facing the microtubule plus end conferring a structural polarity. Microtubules usually have 13 protofilaments but different protofilament numbers can be found in some organisms and specialized cells. Mg(2+) serves as cofactor. In terms of processing, undergoes a tyrosination/detyrosination cycle, the cyclic removal and re-addition of a C-terminal tyrosine residue by the enzymes tubulin tyrosine carboxypeptidase (TTCP) and tubulin tyrosine ligase (TTL), respectively. Acetylation of alpha chains at Lys-40 stabilizes microtubules and affects affinity and processivity of microtubule motors. This modification has a role in multiple cellular functions, ranging from cell motility, cell cycle progression or cell differentiation to intracellular trafficking and signaling.

It is found in the cytoplasm. Its subcellular location is the cytoskeleton. The catalysed reaction is GTP + H2O = GDP + phosphate + H(+). Its function is as follows. Tubulin is the major constituent of microtubules, a cylinder consisting of laterally associated linear protofilaments composed of alpha- and beta-tubulin heterodimers. Microtubules grow by the addition of GTP-tubulin dimers to the microtubule end, where a stabilizing cap forms. Below the cap, tubulin dimers are in GDP-bound state, owing to GTPase activity of alpha-tubulin. The sequence is that of Tubulin alpha chain from Plasmodium falciparum (isolate K1 / Thailand).